We begin with the raw amino-acid sequence, 325 residues long: Germination protease (325 aa).

Positions methionine 1–aspartate 7 are excised as a propeptide.

This sequence belongs to the peptidase A25 family. In terms of assembly, homotetramer. Post-translationally, autoproteolytically processed. The inactive tetrameric zymogen termed p46 autoprocesses to a smaller form termed p41, which is active only during spore germination.

The catalysed reaction is Endopeptidase action with P4 Glu or Asp, P1 preferably Glu &gt; Asp, P1' hydrophobic and P2' Ala.. Initiates the rapid degradation of small, acid-soluble proteins during spore germination. The chain is Germination protease from Clostridium perfringens (strain ATCC 13124 / DSM 756 / JCM 1290 / NCIMB 6125 / NCTC 8237 / Type A).